A 292-amino-acid polypeptide reads, in one-letter code: 4-hydroxy-tetrahydrodipicolinate synthase (292 aa).

Residue Thr45 coordinates pyruvate. Tyr133 acts as the Proton donor/acceptor in catalysis. The active-site Schiff-base intermediate with substrate is the Lys161. Ile203 contributes to the pyruvate binding site.

This sequence belongs to the DapA family. As to quaternary structure, homotetramer; dimer of dimers.

It localises to the cytoplasm. It carries out the reaction L-aspartate 4-semialdehyde + pyruvate = (2S,4S)-4-hydroxy-2,3,4,5-tetrahydrodipicolinate + H2O + H(+). Its pathway is amino-acid biosynthesis; L-lysine biosynthesis via DAP pathway; (S)-tetrahydrodipicolinate from L-aspartate: step 3/4. In terms of biological role, catalyzes the condensation of (S)-aspartate-beta-semialdehyde [(S)-ASA] and pyruvate to 4-hydroxy-tetrahydrodipicolinate (HTPA). This Shigella boydii serotype 18 (strain CDC 3083-94 / BS512) protein is 4-hydroxy-tetrahydrodipicolinate synthase.